The chain runs to 1663 residues: Cortactin-binding protein 2 (1663 aa).

Disordered regions lie at residues 1-23, 203-222, 358-440, and 454-479; these read MATD…AGAA, KKKT…RSTE, RQAS…LHPG, and GNAN…PTSR. The stretch at 119-276 forms a coiled coil; it reads KKMQERMSAQ…EQLKRGSDSK (158 aa). The segment covering 386-396 has biased composition (low complexity); the sequence is PSTDSTPDPTS. Residues 411-422 show a composition bias toward polar residues; that stretch reads QTPGIAPQNSQA. The residue at position 498 (R498) is an Asymmetric dimethylarginine. Positions 499-616 are disordered; the sequence is FTSPQAGAPS…SSPQLPPKPS (118 aa). Polar residues predominate over residues 583–593; sequence TVASPPSSLPQ. ANK repeat units follow at residues 709 to 739, 743 to 772, 776 to 805, 809 to 838, 842 to 871, and 912 to 942; these read GRPT…DINY, DGHS…QINA, NGFT…NINH, GGQT…NRSV, DGWT…PACG, and EGWT…EPER. Positions 1446 to 1477 are disordered; it reads NKKKGESGAWRKVNTSPRRKSGRFSLPTWNKP. Residue S1524 is modified to Phosphoserine. 2 disordered regions span residues 1580–1602 and 1618–1663; these read SQKE…KSKT and SKVT…KPNK. Positions 1582–1599 are enriched in polar residues; sequence KEVSPLSSHQTTECSNSK. Positions 1624–1638 are enriched in low complexity; sequence SQNTKRSSSSSNTRQ. The span at 1645-1663 shows a compositional bias: basic and acidic residues; it reads SKKENWNLHKNEHLDKPNK.

In terms of assembly, interacts with CTTN/cortactin SH3 domain. Interacts with STRN, STRN4/zinedin and MOB4/phocein; this interactions mediate the association with the STRIPAK core complex and may regulate dendritic spine distribution of the STRIPAK complex in hippocampal neurons. Activation of glutamate receptors weakens the interaction with STRN and STRN4.

It localises to the cytoplasm. Its subcellular location is the cell cortex. The protein resides in the cell projection. The protein localises to the dendritic spine. Its function is as follows. Regulates the dendritic spine distribution of CTTN/cortactin in hippocampal neurons, and thus controls dendritic spinogenesis and dendritic spine maintenance. Associates with the striatin-interacting phosphatase and kinase (STRIPAK) core complex to regulate dendritic spine distribution of the STRIPAK complex in hippocampal neurons. The protein is Cortactin-binding protein 2 (CTTNBP2) of Colobus guereza (Mantled guereza).